Reading from the N-terminus, the 25-residue chain is Caerin 1.1 (25 aa).

Leu-25 carries the post-translational modification Leucine amide.

In terms of tissue distribution, expressed by the skin dorsal glands.

The protein resides in the secreted. In terms of biological role, antibacterial peptide with wide spectrum of activity. Active against the Gram-positive bacteria B.cereus (MIC=50 ug/ml), E.faecalis (MIC=25 ug/ml), L.lactis (MIC=1.5 ug/ml), L.innocua (MIC=25 ug/ml), S.aureus (MIC=3 ug/ml), S.epidermidis (MIC=12 ug/ml) and S.uberis (MIC=12 ug/ml), and against the Gram-negative bacteria E.coli (MIC=100 ug/ml) and P.multocida (MIC=25 ug/ml). This Litoria peronii (Emerald spotted tree frog) protein is Caerin 1.1.